The sequence spans 248 residues: 2,3-bisphosphoglycerate-dependent phosphoglycerate mutase (248 aa).

Substrate contacts are provided by residues 8-15 (RHGESLWN), 21-22 (TG), Arg60, 87-90 (EKHY), Lys98, 114-115 (RR), and 183-184 (GN). The active-site Tele-phosphohistidine intermediate is the His9. The active-site Proton donor/acceptor is the Glu87.

Belongs to the phosphoglycerate mutase family. BPG-dependent PGAM subfamily.

The catalysed reaction is (2R)-2-phosphoglycerate = (2R)-3-phosphoglycerate. Its pathway is carbohydrate degradation; glycolysis; pyruvate from D-glyceraldehyde 3-phosphate: step 3/5. Its function is as follows. Catalyzes the interconversion of 2-phosphoglycerate and 3-phosphoglycerate. The sequence is that of 2,3-bisphosphoglycerate-dependent phosphoglycerate mutase from Porphyromonas gingivalis (strain ATCC 33277 / DSM 20709 / CIP 103683 / JCM 12257 / NCTC 11834 / 2561).